Reading from the N-terminus, the 194-residue chain is Adenylate kinase (194 aa).

10–15 provides a ligand contact to ATP; that stretch reads GAGKGT. An NMP region spans residues 30 to 59; it reads STGDMLRAAVAQQSEIGKRAKAVMDAGQLV. Residues threonine 31, arginine 36, 57 to 59, 85 to 88, and glutamine 92 each bind AMP; these read QLV and GYPR. The LID stretch occupies residues 126 to 142; sequence SRVAETIAKGAQVRSDD. Position 127 (arginine 127) interacts with ATP. Positions 139 and 150 each coordinate AMP. Residue alanine 178 participates in ATP binding.

This sequence belongs to the adenylate kinase family. Monomer.

It localises to the cytoplasm. It carries out the reaction AMP + ATP = 2 ADP. It functions in the pathway purine metabolism; AMP biosynthesis via salvage pathway; AMP from ADP: step 1/1. Catalyzes the reversible transfer of the terminal phosphate group between ATP and AMP. Plays an important role in cellular energy homeostasis and in adenine nucleotide metabolism. The polypeptide is Adenylate kinase (Brucella melitensis biotype 1 (strain ATCC 23456 / CCUG 17765 / NCTC 10094 / 16M)).